The primary structure comprises 497 residues: Di-/tripeptide transporter (497 aa).

Topologically, residues 1-36 (MQNLNKTEKTFFGQPRGLLTLFQTEFWERFSYYGMR) are cytoplasmic. A helical membrane pass occupies residues 37–55 (AILVYYLYALTTADNAGLG). Topologically, residues 56-64 (LPKAQAMAI) are extracellular. Residues 65–83 (VSIYGALVYLSTIVGGWVA) traverse the membrane as a helical segment. Residues 84-92 (DRLLGASRT) are Cytoplasmic-facing. The helical transmembrane segment at 93–111 (IFLGGILITLGHVALATPF) threads the bilayer. The Extracellular segment spans residues 112-115 (GLSS). The helical transmembrane segment at 116–134 (LFVALFLIILGTGMLKPNI) threads the bilayer. Over 135–154 (SNMVGHLYSKDDSRRDTGFN) the chain is Cytoplasmic. The chain crosses the membrane as a helical span at residues 155–173 (IFVVGINMGSLIAPLIVGT). At 174–181 (VGQGVNYH) the chain is on the extracellular side. Residues 182–200 (LGFSLAAIGMIFALFAYWY) form a helical membrane-spanning segment. Residues 201–224 (GRLRHFPEIGREPSNPMDAKAKRN) are Cytoplasmic-facing. A helical transmembrane segment spans residues 225–243 (FIITLTIVLIVALIGFFLI). At 244–254 (YQASPANFINN) the chain is on the extracellular side. A helical membrane pass occupies residues 255 to 273 (FINVLSIIGIVVPIIYFVM). The Cytoplasmic segment spans residues 274-293 (MFTSKKVESDERRKLTAYIP). Residues 294 to 312 (LFLSAIVFWAIEEQSSTII) form a helical membrane-spanning segment. At 313-335 (AVWGESRSNLNPTWFGFTFHIDP) the chain is on the extracellular side. The chain crosses the membrane as a helical span at residues 336 to 354 (SWYQLLNPLFIVLLSPIFV). Residues 355 to 372 (RIWNKLGDRQPSTIVKFG) are Cytoplasmic-facing. Residues 373 to 391 (LGLMLTGASYLIMTLPGLL) traverse the membrane as a helical segment. The Extracellular segment spans residues 392–425 (NGTSGRASALWLVLMFAVQMAGELLVSPVGLSVS). Residues 426–444 (TKLAPVAFQSQMMAMWFLA) form a helical membrane-spanning segment. Residues 445-497 (DSTSQAINAQITPIFKAATEVHFFAITGIIGIIVGIILLIIKKPILKLMGDVR) are Cytoplasmic-facing.

It belongs to the major facilitator superfamily. Proton-dependent oligopeptide transporter (POT/PTR) (TC 2.A.17) family.

It localises to the cell membrane. Functionally, proton-dependent uptake of di- or tri-peptides. The sequence is that of Di-/tripeptide transporter (dtpT) from Lactococcus lactis subsp. cremoris (Streptococcus cremoris).